A 190-amino-acid chain; its full sequence is Protein hunchback (190 aa).

3 disordered regions span residues E13 to L59, A86 to M110, and Q142 to A190. Basic residues predominate over residues H17–L31. Residues P90–P100 show a composition bias toward polar residues. The span at E171 to A190 shows a compositional bias: basic and acidic residues.

Belongs to the hunchback C2H2-type zinc-finger protein family.

The protein resides in the nucleus. Functionally, gap class segmentation protein that controls development of head structures. The sequence is that of Protein hunchback (hb) from Scaptomyza crassifemur (Fruit fly).